A 380-amino-acid polypeptide reads, in one-letter code: ATPase ASNA1 homolog (380 aa).

48–55 (KGGVGKTT) is an ATP binding site. D77 is a catalytic residue. Residues E248 and N275 each contribute to the ATP site.

Belongs to the arsA ATPase family. As to quaternary structure, homodimer.

It localises to the cytoplasm. Its subcellular location is the endoplasmic reticulum. Its function is as follows. ATPase required for the post-translational delivery of tail-anchored (TA) proteins to the endoplasmic reticulum. Recognizes and selectively binds the transmembrane domain of TA proteins in the cytosol. This complex then targets to the endoplasmic reticulum by membrane-bound receptors, where the tail-anchored protein is released for insertion. This process is regulated by ATP binding and hydrolysis. ATP binding drives the homodimer towards the closed dimer state, facilitating recognition of newly synthesized TA membrane proteins. ATP hydrolysis is required for insertion. Subsequently, the homodimer reverts towards the open dimer state, lowering its affinity for the membrane-bound receptor, and returning it to the cytosol to initiate a new round of targeting. This is ATPase ASNA1 homolog from Plasmodium chabaudi chabaudi.